The primary structure comprises 401 residues: ADP-forming sulfoacetate-CoA ligase subunit SqwK (401 aa).

The ATP-grasp domain occupies 9 to 217 (KTVFSEHKIP…DNSVFRQPRF (209 aa)). An ATP-binding site is contributed by 35 to 96 (KSVGFPSVVK…EEAVHIDKEI (62 aa)). Mg(2+) contacts are provided by Glu185 and Asn187.

Belongs to the succinate/malate CoA ligase beta subunit family. As to quaternary structure, forms a complex with SqwL. The cofactor is Mg(2+).

It carries out the reaction sulfoacetate + ATP + CoA = sulfoacetyl-CoA + ADP + phosphate. In terms of biological role, part of a variant of the sulfo-TK pathway, a D-sulfoquinovose degradation pathway that produces sulfoacetate. Hydrolyzes sulfoacetyl-coenzyme A (sulfoacetyl-CoA) to produce sulfoacetate and CoA coupled with the phosphorylation of ADP to generate ATP. Cannot use succinate, acetate or 3-hydroxypropionate, and shows only residual activities with malonate and 3-sulfopropanoate. This chain is ADP-forming sulfoacetate-CoA ligase subunit SqwK, found in Acholeplasma sp.